The primary structure comprises 145 residues: Large ribosomal subunit protein uL15 (145 aa).

Residues 1-50 are disordered; it reads MLHTIKPVANARKTTKRLGRGPGSGTGKTSGKGHKGQLARSGKTLRPGFE. A compositionally biased stretch (gly residues) spans 20 to 30; that stretch reads RGPGSGTGKTS.

The protein belongs to the universal ribosomal protein uL15 family. Part of the 50S ribosomal subunit.

In terms of biological role, binds to the 23S rRNA. The chain is Large ribosomal subunit protein uL15 from Phytoplasma australiense.